A 491-amino-acid chain; its full sequence is tRNA-2-methylthio-N(6)-dimethylallyladenosine synthase (491 aa).

The MTTase N-terminal domain maps to 3–119 (RSYQIRTYGC…LPTLLERARH (117 aa)). Cysteine 12, cysteine 48, cysteine 82, cysteine 156, cysteine 160, and cysteine 163 together coordinate [4Fe-4S] cluster. A Radical SAM core domain is found at 142-372 (RESAYSGWVS…IELQNQISWD (231 aa)). The TRAM domain maps to 375–446 (KELVGRSVEL…PHHLVADSEI (72 aa)).

Belongs to the methylthiotransferase family. MiaB subfamily. Monomer. The cofactor is [4Fe-4S] cluster.

The protein resides in the cytoplasm. The catalysed reaction is N(6)-dimethylallyladenosine(37) in tRNA + (sulfur carrier)-SH + AH2 + 2 S-adenosyl-L-methionine = 2-methylsulfanyl-N(6)-dimethylallyladenosine(37) in tRNA + (sulfur carrier)-H + 5'-deoxyadenosine + L-methionine + A + S-adenosyl-L-homocysteine + 2 H(+). In terms of biological role, catalyzes the methylthiolation of N6-(dimethylallyl)adenosine (i(6)A), leading to the formation of 2-methylthio-N6-(dimethylallyl)adenosine (ms(2)i(6)A) at position 37 in tRNAs that read codons beginning with uridine. This Saccharopolyspora erythraea (strain ATCC 11635 / DSM 40517 / JCM 4748 / NBRC 13426 / NCIMB 8594 / NRRL 2338) protein is tRNA-2-methylthio-N(6)-dimethylallyladenosine synthase.